The chain runs to 823 residues: ATP-dependent DNA helicase At3g02060, chloroplastic (823 aa).

A chloroplast-targeting transit peptide spans M1 to S53. Positions L285–I447 constitute a Helicase ATP-binding domain. Residue G298–T305 coordinates ATP. The DEEQ box signature appears at D400 to Q403. The Helicase C-terminal domain occupies R465 to G622.

The protein belongs to the helicase family.

It localises to the plastid. The protein resides in the chloroplast. It catalyses the reaction ATP + H2O = ADP + phosphate + H(+). In Arabidopsis thaliana (Mouse-ear cress), this protein is ATP-dependent DNA helicase At3g02060, chloroplastic.